Reading from the N-terminus, the 128-residue chain is Iron-sulfur cluster insertion protein ErpA (128 aa).

The iron-sulfur cluster site is built by Cys56, Cys120, and Cys122.

The protein belongs to the HesB/IscA family. In terms of assembly, homodimer. Iron-sulfur cluster is required as a cofactor.

Functionally, required for insertion of 4Fe-4S clusters for at least IspG. This Xanthomonas campestris pv. campestris (strain 8004) protein is Iron-sulfur cluster insertion protein ErpA.